A 65-amino-acid polypeptide reads, in one-letter code: Light-harvesting protein B800/830/1020 alpha-2 chain (65 aa).

Topologically, residues 1–13 (MWKLWKFVDFRMT) are cytoplasmic. A helical membrane pass occupies residues 14 to 34 (AVGFHIFFALIAFAVHFACIS). H29 serves as a coordination point for a bacteriochlorophyll. Residues 35 to 65 (SERFNWLEGAPAAEYYMDENPGIWKRTSYDG) are Periplasmic-facing.

It belongs to the antenna complex alpha subunit family. The core complex is formed by different alpha and beta chains, binding bacteriochlorophyll molecules, and arranged most probably in tetrameric structures disposed around the reaction center. The non-pigmented gamma chains may constitute additional components.

It is found in the cell inner membrane. In terms of biological role, antenna complexes are light-harvesting systems, which transfer the excitation energy to the reaction centers. The sequence is that of Light-harvesting protein B800/830/1020 alpha-2 chain from Halorhodospira halochloris (Ectothiorhodospira halochloris).